A 383-amino-acid chain; its full sequence is S-adenosylmethionine synthase (383 aa).

His15 is a binding site for ATP. Residue Asp17 participates in Mg(2+) binding. A K(+)-binding site is contributed by Glu43. Glu56 and Gln99 together coordinate L-methionine. Residues 99 to 109 (QSPDINQGVDR) form a flexible loop region. ATP contacts are provided by residues 164–166 (DAK), 230–231 (RF), Asp239, 245–246 (RK), Ala262, and Lys266. Asp239 is an L-methionine binding site. Residue Lys270 participates in L-methionine binding.

This sequence belongs to the AdoMet synthase family. As to quaternary structure, homotetramer; dimer of dimers. Requires Mg(2+) as cofactor. K(+) serves as cofactor.

The protein resides in the cytoplasm. It catalyses the reaction L-methionine + ATP + H2O = S-adenosyl-L-methionine + phosphate + diphosphate. The protein operates within amino-acid biosynthesis; S-adenosyl-L-methionine biosynthesis; S-adenosyl-L-methionine from L-methionine: step 1/1. In terms of biological role, catalyzes the formation of S-adenosylmethionine (AdoMet) from methionine and ATP. The overall synthetic reaction is composed of two sequential steps, AdoMet formation and the subsequent tripolyphosphate hydrolysis which occurs prior to release of AdoMet from the enzyme. This chain is S-adenosylmethionine synthase, found in Shewanella loihica (strain ATCC BAA-1088 / PV-4).